A 1051-amino-acid chain; its full sequence is Transcription intermediary factor 1-alpha (1051 aa).

The disordered stretch occupies residues 1-42 (MEVAVEKAAAAAAPAGGPAAAAPSGENEAESRQGPDSESGGE). Residue Lys-7 forms a Glycyl lysine isopeptide (Lys-Gly) (interchain with G-Cter in SUMO2) linkage. Residues 8-23 (AAAAAAPAGGPAAAAP) are compositionally biased toward low complexity. The RING-type zinc-finger motif lies at 52–77 (CAVCHQNIQSRVPKLLPCLHSFCQRC). A disordered region spans residues 94–115 (SAETPPPAPAPAPAPGSPAGGP). Thr-97 is subject to Phosphothreonine. The span at 97–109 (TPPPAPAPAPAPG) shows a compositional bias: pro residues. The residue at position 110 (Ser-110) is a Phosphoserine. B box-type zinc fingers lie at residues 158–211 (KSNQ…VSPE) and 218–259 (QRPV…YQFI). Cys-163, Cys-166, Cys-187, and His-200 together coordinate Zn(2+). A Glycyl lysine isopeptide (Lys-Gly) (interchain with G-Cter in SUMO2) cross-link involves residue Lys-205. Zn(2+) contacts are provided by Cys-223, His-226, Cys-246, and His-251. Lys-276 is covalently cross-linked (Glycyl lysine isopeptide (Lys-Gly) (interchain with G-Cter in SUMO2)). Residues 289 to 359 (NQIQNRIIEI…AGLSKQLEHV (71 aa)) adopt a coiled-coil conformation. The interval 429 to 457 (ESQPQMPKQNPVVEQSSQPPGGLPSNQLS) is disordered. A compositionally biased stretch (polar residues) spans 431-457 (QPQMPKQNPVVEQSSQPPGGLPSNQLS). Residues Lys-436 and Lys-458 each participate in a glycyl lysine isopeptide (Lys-Gly) (interchain with G-Cter in SUMO2) cross-link. An Omega-N-methylarginine modification is found at Arg-469. Composition is skewed to low complexity over residues 479 to 490 (AQRQQVQRRPAP) and 501 to 510 (PIQQPSISHQ). The tract at residues 479–551 (AQRQQVQRRP…PSQNVPRQTT (73 aa)) is disordered. Pro residues predominate over residues 526–535 (PNGPVLPPYP). Polar residues predominate over residues 538 to 551 (LRYSPSQNVPRQTT). Residues Lys-553 and Lys-642 each participate in a glycyl lysine isopeptide (Lys-Gly) (interchain with G-Cter in SUMO2) cross-link. Positions 644-713 (TGVDHAQPRP…PAGADSTHKV (70 aa)) are disordered. Phosphoserine is present on residues Ser-655, Ser-661, and Ser-668. Residues 655–667 (SNRTVQSPNSSVP) are compositionally biased toward polar residues. Residues 686 to 708 (SPSASSVGSRGSSGSSSKPAGAD) show a composition bias toward low complexity. Residues Lys-703 and Lys-712 each participate in a glycyl lysine isopeptide (Lys-Gly) (interchain with G-Cter in SUMO2) cross-link. Residues Lys-724 and Lys-742 each participate in a glycyl lysine isopeptide (Lys-Gly) (interchain with G-Cter in SUMO); alternate cross-link. Lys-724 participates in a covalent cross-link: Glycyl lysine isopeptide (Lys-Gly) (interchain with G-Cter in SUMO1); alternate. Residues Lys-724 and Lys-742 each participate in a glycyl lysine isopeptide (Lys-Gly) (interchain with G-Cter in SUMO2); alternate cross-link. Phosphoserine is present on residues Ser-745 and Ser-769. The interval 755–780 (NYPRSILTSLLLNSSQSSASEETVLR) is nuclear receptor binding site (NRBS). Residues 771–827 (SSASEETVLRSDAPDSTGDQPGLHQENSSNGKSEWSDASQKSPVHVGETRKEDDPNE) form a disordered region. A compositionally biased stretch (polar residues) spans 795-812 (QENSSNGKSEWSDASQKS). Lys-802 is covalently cross-linked (Glycyl lysine isopeptide (Lys-Gly) (interchain with G-Cter in SUMO2)). Ser-809 carries the phosphoserine modification. A Glycyl lysine isopeptide (Lys-Gly) (interchain with G-Cter in SUMO2) cross-link involves residue Lys-811. The residue at position 812 (Ser-812) is a Phosphoserine. Thr-819 bears the Phosphothreonine mark. The PHD-type zinc finger occupies 827–874 (EDWCAVCQNGGELLCCEKCPKVFHLTCHVPTLTNFPSGEWICTFCRDL). An interaction with histone H3 that is not methylated at 'Lys-4' (H3K4me0) region spans residues 835-841 (NGGELLC). Lys-876 participates in a covalent cross-link: Glycyl lysine isopeptide (Lys-Gly) (interchain with G-Cter in SUMO2). A Nuclear localization signal motif is present at residues 892–908 (KRKSEGLTKLTPIDKRK). The 106-residue stretch at 900 to 1005 (KLTPIDKRKC…SYFEELLKNL (106 aa)) folds into the Bromo domain. Residues Lys-950 and Lys-993 each participate in a glycyl lysine isopeptide (Lys-Gly) (interchain with G-Cter in SUMO2) cross-link. A disordered region spans residues 1024-1051 (KFSDDSDDDFVQPRKKRLKSTEDRQLLK). Ser-1026 and Ser-1029 each carry phosphoserine. Residue Lys-1042 forms a Glycyl lysine isopeptide (Lys-Gly) (interchain with G-Cter in SUMO2) linkage. Residues 1042-1051 (KSTEDRQLLK) show a composition bias toward basic and acidic residues. At Ser-1043 the chain carries Phosphoserine.

In terms of assembly, interacts (via bromo domain) with histone H3 (via N-terminus), provided that it is not methylated at 'Lys-4' (H3K4me0). Does not interact with histone H3 that is methylated at 'Lys-4' (H3K4me1, H3K4me2 or H3K4me3). Interacts (via bromo domain) with histone H3 (via N-terminus) that is acetylated at 'Lys-23' (H3K23ac). Has the highest affinity for histone H3 that is both unmodified at 'Lys-4' (H3K4me0) and acetylated at 'Lys-23' (H3K23ac). Has very low affinity for histone H3 that is methylated at 'Lys-9' (H3K9me), or acetylated at both 'Lys-9' (H3K9ac) and 'Lys-14' (H3K14ac), or acetylated at 'Lys-27' (H3K27ac) (in vitro). Interacts with TRIM16. Interacts with NR3C2/MCR. Interacts with the ligand-binding domain of estrogen receptors (in vitro). Interaction with DNA-bound estrogen receptors requires the presence of estradiol. Interacts with AR, CARM1, KAT5/TIP60, NCOA2/GRIP1, BRD7, CBX1, CBX3 and CBX5. Part of a coactivator complex containing TRIM24, NCOA2/GRIP1 and CARM1. Interacts with p53/TP53 and PML. In terms of processing, sumoylated. Post-translationally, phosphorylated at Ser-768 by ATM kinase induces ubiquitination and degradation during DNA damage. Undergoes ubiquitination-mediated degradation in response to DNA damage. Detected in embryonic and adult liver. Detected in zygote and throughout embryogenesis (at protein level). Detected in all adult tissues, with the highest expression level in testis.

The protein resides in the nucleus. It localises to the cytoplasm. The enzyme catalyses S-ubiquitinyl-[E2 ubiquitin-conjugating enzyme]-L-cysteine + [acceptor protein]-L-lysine = [E2 ubiquitin-conjugating enzyme]-L-cysteine + N(6)-ubiquitinyl-[acceptor protein]-L-lysine.. Its pathway is protein modification; protein ubiquitination. Functionally, transcriptional coactivator that interacts with numerous nuclear receptors and coactivators and modulates the transcription of target genes. Interacts with chromatin depending on histone H3 modifications, having the highest affinity for histone H3 that is both unmodified at 'Lys-4' (H3K4me0) and acetylated at 'Lys-23' (H3K23ac). Has E3 protein-ubiquitin ligase activity. Promotes ubiquitination and proteasomal degradation of p53/TP53. Plays a role in the regulation of cell proliferation and apoptosis via its effects on p53/TP53 levels. Up-regulates ligand-dependent transcription activation by AR, GCR/NR3C1, thyroid hormone receptor (TR) and ESR1. Modulates transcription activation by retinoic acid (RA) receptors, such as RARA. Plays a role in regulating retinoic acid-dependent proliferation of hepatocytes. Required for normal transition from proliferating neonatal hepatocytes to quiescent adult hepatocytes. Its function is as follows. Transcriptional coactivator that interacts with numerous nuclear receptors and coactivators and modulates the transcription of target genes. Interacts with chromatin depending on histone H3 modifications, having the highest affinity for histone H3 that is both unmodified at 'Lys-4' (H3K4me0) and acetylated at 'Lys-23' (H3K23ac). Has E3 protein-ubiquitin ligase activity. During the DNA damage response, participates in an autoregulatory feedback loop with TP53. Early in response to DNA damage, ATM kinase phosphorylates TRIM24 leading to its ubiquitination and degradation. After sufficient DNA repair has occurred, TP53 activates TRIM24 transcription, ultimately leading to TRIM24-mediated TP53 ubiquitination and degradation. Plays a role in the regulation of cell proliferation and apoptosis, at least in part via its effects on p53/TP53 levels. Up-regulates ligand-dependent transcription activation by AR, GCR/NR3C1, thyroid hormone receptor (TR) and ESR1. Modulates transcription activation by retinoic acid (RA) receptors, including RARA. Plays a role in regulating retinoic acid-dependent proliferation of hepatocytes. Also participates in innate immunity by mediating the specific 'Lys-63'-linked ubiquitination of TRAF3 leading to activation of downstream signal transduction of the type I IFN pathway. Additionally, negatively regulates NLRP3/CASP1/IL-1beta-mediated pyroptosis and cell migration probably by ubiquitinating NLRP3. The chain is Transcription intermediary factor 1-alpha (Trim24) from Mus musculus (Mouse).